Here is a 158-residue protein sequence, read N- to C-terminus: NADH-quinone oxidoreductase subunit B (158 aa).

Residues C37, C38, C102, and C132 each contribute to the [4Fe-4S] cluster site.

Belongs to the complex I 20 kDa subunit family. NDH-1 is composed of 14 different subunits. Subunits NuoB, C, D, E, F, and G constitute the peripheral sector of the complex. [4Fe-4S] cluster serves as cofactor.

The protein resides in the cell inner membrane. It catalyses the reaction a quinone + NADH + 5 H(+)(in) = a quinol + NAD(+) + 4 H(+)(out). Functionally, NDH-1 shuttles electrons from NADH, via FMN and iron-sulfur (Fe-S) centers, to quinones in the respiratory chain. Couples the redox reaction to proton translocation (for every two electrons transferred, four hydrogen ions are translocated across the cytoplasmic membrane), and thus conserves the redox energy in a proton gradient. The sequence is that of NADH-quinone oxidoreductase subunit B from Legionella pneumophila (strain Corby).